Reading from the N-terminus, the 700-residue chain is Chaperonin CPN60, mitochondrial (700 aa).

A mitochondrion-targeting transit peptide spans 1-9 (MRMKRIHIL). The interval 636–700 (TYKHKLHDDE…SMNDEYNYDE (65 aa)) is disordered. Acidic residues predominate over residues 644-700 (DEDTDEDDEEDEDDEDDEDDLDDDDYDDEDEEDEEDEEDEDDEDDEDSMNDEYNYDE).

It belongs to the chaperonin (HSP60) family.

The protein resides in the mitochondrion matrix. Its function is as follows. Implicated in mitochondrial protein import and macromolecular assembly. May facilitate the correct folding of imported proteins. May also prevent misfolding and promote the refolding and proper assembly of unfolded polypeptides generated under stress conditions in the mitochondrial matrix. This chain is Chaperonin CPN60, mitochondrial, found in Plasmodium falciparum (isolate FCR-3 / Gambia).